We begin with the raw amino-acid sequence, 657 residues long: Protein mono-ADP-ribosyltransferase TIPARP (657 aa).

A compositionally biased stretch (acidic residues) spans 1–10; that stretch reads MEMETTEPEP. The interval 1–21 is disordered; the sequence is MEMETTEPEPDCVVQPPSPPD. ADP-ribosylcysteine is present on cysteine 39. Positions 41 to 47 match the Nuclear localization signal motif; sequence KKKDQKR. The C3H1-type zinc finger occupies 237 to 264; that stretch reads ENGIEICMDFLQGTCIYGRDCLKHHTVL. The WWE domain occupies 332 to 410; sequence STPPSSNVNS…RRPLFRSCFI (79 aa). Positions 449–657 constitute a PARP catalytic domain; the sequence is YPETWVYMHP…YEEVSNTVSI (209 aa).

Belongs to the ARTD/PARP family. As to quaternary structure, interacts with AHR. Auto-mono-ADP-ribosylated.

The protein resides in the nucleus. The catalysed reaction is L-aspartyl-[protein] + NAD(+) = 4-O-(ADP-D-ribosyl)-L-aspartyl-[protein] + nicotinamide. The enzyme catalyses L-glutamyl-[protein] + NAD(+) = 5-O-(ADP-D-ribosyl)-L-glutamyl-[protein] + nicotinamide. It catalyses the reaction L-cysteinyl-[protein] + NAD(+) = S-(ADP-D-ribosyl)-L-cysteinyl-[protein] + nicotinamide + H(+). Its activity is regulated as follows. ADP-ribosyltransferase activity is inhibited by PJ34; inhibition is however not specific to TIPARP and other PARP-domain containing proteins are also inhibited by PJ34. Partially inhibited by KU0058948. Its function is as follows. ADP-ribosyltransferase that mediates mono-ADP-ribosylation of glutamate, aspartate and cysteine residues on target proteins. Acts as a negative regulator of AHR by mediating mono-ADP-ribosylation of AHR, leading to inhibit transcription activator activity of AHR. This Homo sapiens (Human) protein is Protein mono-ADP-ribosyltransferase TIPARP.